The chain runs to 563 residues: Arylsulfatase K (563 aa).

A signal peptide spans Met-1–Pro-17. Ca(2+) contacts are provided by Asp-40 and Cys-80. Cys-80 serves as the catalytic Nucleophile. Cys-80 carries the post-translational modification 3-oxoalanine (Cys). Residue Asn-108 is glycosylated (N-linked (GlcNAc...) asparagine). Lys-128 contributes to the substrate binding site. A glycan (N-linked (GlcNAc...) asparagine) is linked at Asn-191. Residue His-249 participates in substrate binding. N-linked (GlcNAc...) asparagine glycosylation occurs at Asn-260. Ca(2+)-binding residues include Asp-311 and His-312. N-linked (GlcNAc...) asparagine glycans are attached at residues Asn-373, Asn-411, and Asn-496.

Belongs to the sulfatase family. Ca(2+) serves as cofactor. Post-translationally, the conversion to 3-oxoalanine (also known as C-formylglycine, FGly), of a serine or cysteine residue in prokaryotes and of a cysteine residue in eukaryotes, is critical for catalytic activity. In terms of processing, the 75-kDa precursor undergoes proteolytic processing to yield a 23 kDa form. N-glycosylated with both high mannose and complex type sugars.

The protein resides in the secreted. The protein localises to the lysosome. The catalysed reaction is an aryl sulfate + H2O = a phenol + sulfate + H(+). It carries out the reaction Hydrolysis of the 2-sulfate groups of the 2-O-sulfo-D-glucuronate residues of chondroitin sulfate, heparin and heparitin sulfate.. In terms of biological role, catalyzes the hydrolysis of pseudosubstrates such as p-nitrocatechol sulfate and p-nitrophenyl sulfate. Catalyzes the hydrolysis of the 2-sulfate groups of the 2-O-sulfo-D-glucuronate residues of chondroitin sulfate, heparin and heparitin sulfate. Acts selectively on 2-sulfoglucuronate and lacks activity against 2-sulfoiduronate. The protein is Arylsulfatase K (Arsk) of Rattus norvegicus (Rat).